The sequence spans 342 residues: MKRKWNLEDTKKLFSKPFFDLIFEAQKKHREYFNPNRIQISTLLSIKTGACPEDCKYCPQSSRYKTGLKKEPLLEIEQILKAAKKAKSSGSTRFCMGAAWKNPKEKDMPYLEKIVKEVKKMGMETCMTLGTLNNSQAKKLAKAGLDFYNHNLDTSSNFYSSIITTRTYEERLSTLKKVRNSGMKICSGGIIGLGEKKQDRMELLMELSNLSIQPESVPINMLVKIPGTPMEKNENVDPFEFIRVIAATRIMMPKSYIRLSAGRENMSDETQAMCFMAGANSIFYGCKLLTSSNPKEEKDQKLFEKLDLFPDYKIQSITEENKNNENLKISDVNKAQYYNAAI.

One can recognise a Radical SAM core domain in the interval 36–260 (NRIQISTLLS…MMPKSYIRLS (225 aa)). 3 residues coordinate [4Fe-4S] cluster: cysteine 51, cysteine 55, and cysteine 58. Cysteine 95, cysteine 126, cysteine 186, and arginine 258 together coordinate [2Fe-2S] cluster.

The protein belongs to the radical SAM superfamily. Biotin synthase family. In terms of assembly, homodimer. The cofactor is [4Fe-4S] cluster. It depends on [2Fe-2S] cluster as a cofactor.

It carries out the reaction (4R,5S)-dethiobiotin + (sulfur carrier)-SH + 2 reduced [2Fe-2S]-[ferredoxin] + 2 S-adenosyl-L-methionine = (sulfur carrier)-H + biotin + 2 5'-deoxyadenosine + 2 L-methionine + 2 oxidized [2Fe-2S]-[ferredoxin]. The protein operates within cofactor biosynthesis; biotin biosynthesis; biotin from 7,8-diaminononanoate: step 2/2. Catalyzes the conversion of dethiobiotin (DTB) to biotin by the insertion of a sulfur atom into dethiobiotin via a radical-based mechanism. This is Biotin synthase from Buchnera aphidicola subsp. Schizaphis graminum (strain Sg).